The sequence spans 650 residues: Acetyl-coenzyme A synthetase (650 aa).

CoA-binding positions include 191–194 (RGGR), Thr-311, and Asn-335. Residues 387 to 389 (GEP), 411 to 416 (DTWWQT), Asp-501, and Arg-516 each bind ATP. Ser-524 contacts CoA. Arg-527 contacts ATP. Residues Val-538, His-540, and Ile-543 each coordinate Mg(2+). Residue Arg-585 participates in CoA binding. Lys-610 bears the N6-acetyllysine mark.

This sequence belongs to the ATP-dependent AMP-binding enzyme family. Mg(2+) serves as cofactor. In terms of processing, acetylated. Deacetylation by the SIR2-homolog deacetylase activates the enzyme.

It carries out the reaction acetate + ATP + CoA = acetyl-CoA + AMP + diphosphate. Its function is as follows. Catalyzes the conversion of acetate into acetyl-CoA (AcCoA), an essential intermediate at the junction of anabolic and catabolic pathways. AcsA undergoes a two-step reaction. In the first half reaction, AcsA combines acetate with ATP to form acetyl-adenylate (AcAMP) intermediate. In the second half reaction, it can then transfer the acetyl group from AcAMP to the sulfhydryl group of CoA, forming the product AcCoA. The chain is Acetyl-coenzyme A synthetase from Vibrio vulnificus (strain YJ016).